The sequence spans 137 residues: Small ribosomal subunit protein bS16 (137 aa).

Composition is skewed to basic and acidic residues over residues 80–99 and 111–125; these read KSPEEAQKGGMRKGEFKRLQ and VATEEPKAEEAKEAP. The segment at 80–137 is disordered; that stretch reads KSPEEAQKGGMRKGEFKRLQAEQAAKAQKKAVATEEPKAEEAKEAPPAESQAAEGKEE. Residues 126 to 137 are compositionally biased toward low complexity; sequence PAESQAAEGKEE.

It belongs to the bacterial ribosomal protein bS16 family.

This chain is Small ribosomal subunit protein bS16, found in Coxiella burnetii (strain Dugway 5J108-111).